Reading from the N-terminus, the 1368-residue chain is Protein suppressor 2 of zeste (1368 aa).

Residues C35 to K74 form an RING-type zinc finger. 10 disordered regions span residues S245–L321, Q448–Q628, T640–Q718, A861–C903, A935–A1001, S1057–N1103, I1116–L1141, A1161–R1193, S1211–T1271, and V1298–P1322. Residues P449–Y461 are compositionally biased toward polar residues. The span at S462–S495 shows a compositional bias: low complexity. Positions S496 to K506 are enriched in basic residues. Composition is skewed to low complexity over residues A599–Q628 and P672–Q689. 2 stretches are compositionally biased toward polar residues: residues L936 to R953 and L962 to S977. Low complexity-rich tracts occupy residues N1078–N1099, N1119–G1138, A1161–A1183, and S1231–P1263.

Its subcellular location is the nucleus. Functionally, regulates expression of the homeotic selector genes by influencing higher-order chromatin structure through interaction with other proteins. This Drosophila melanogaster (Fruit fly) protein is Protein suppressor 2 of zeste (Su(z)2).